The following is a 385-amino-acid chain: MLISNTYNQHFPQLTQEQIASNATKKVICGMSGGVDSSVSAFILQQQGYQVEGLFMKNWEEDDDDDTDYCTAAADLADAQAVCDKLGIKLHKINFAAEYWDNVFEHFLTEYKAGRTPNPDILCNKEIKFKAFLEYAAEDLGADYIATGHYVRRAGDNENAKLLRGLDANKDQSYFLYTLSHKQVGQSLFPVGEIEKPIVRAIAEDLGLITAKKKDSTGICFIGERKFKDFLARYLPAQPGNIRTVDDEIIGRHDGLMYHTLGQRKGLGIGGLKNAGDEAWYVVDKDVENNELIVAQGHDHPRLFSKGLIASQLHWVDREPIRESLRCTVKTRYRQQDIPCVIEPIDDETIRVIFDEPQSAVTPGQSAVFYLGEVCLGGGIIAERI.

ATP-binding positions include 30–37 (GMSGGVDS) and M56. The interaction with target base in tRNA stretch occupies residues 118 to 120 (NPD). C123 acts as the Nucleophile in catalysis. A disulfide bond links C123 and C220. G148 serves as a coordination point for ATP. The segment at 170–172 (KDQ) is interaction with tRNA. C220 functions as the Cysteine persulfide intermediate in the catalytic mechanism. The segment at 332–333 (RY) is interaction with tRNA.

It belongs to the MnmA/TRMU family.

The protein localises to the cytoplasm. The enzyme catalyses S-sulfanyl-L-cysteinyl-[protein] + uridine(34) in tRNA + AH2 + ATP = 2-thiouridine(34) in tRNA + L-cysteinyl-[protein] + A + AMP + diphosphate + H(+). Functionally, catalyzes the 2-thiolation of uridine at the wobble position (U34) of tRNA, leading to the formation of s(2)U34. The chain is tRNA-specific 2-thiouridylase MnmA from Haemophilus influenzae (strain PittGG).